We begin with the raw amino-acid sequence, 234 residues long: tRNA1(Val) (adenine(37)-N6)-methyltransferase (234 aa).

This sequence belongs to the methyltransferase superfamily. tRNA (adenine-N(6)-)-methyltransferase family.

Its subcellular location is the cytoplasm. The enzyme catalyses adenosine(37) in tRNA1(Val) + S-adenosyl-L-methionine = N(6)-methyladenosine(37) in tRNA1(Val) + S-adenosyl-L-homocysteine + H(+). Its function is as follows. Specifically methylates the adenine in position 37 of tRNA(1)(Val) (anticodon cmo5UAC). The sequence is that of tRNA1(Val) (adenine(37)-N6)-methyltransferase from Pedobacter heparinus (strain ATCC 13125 / DSM 2366 / CIP 104194 / JCM 7457 / NBRC 12017 / NCIMB 9290 / NRRL B-14731 / HIM 762-3).